The chain runs to 490 residues: Aspartyl aminopeptidase 4 (490 aa).

H97 provides a ligand contact to Zn(2+). Substrate is bound at residue H173. Zn(2+) is bound by residues D273, E308, E309, and D362. Substrate is bound at residue E308. Substrate is bound by residues D362, H365, K390, and Y397. H456 lines the Zn(2+) pocket.

The protein belongs to the peptidase M18 family. Tetrahedron-shaped homododecamer built from six homodimers. Requires Zn(2+) as cofactor.

It localises to the cytoplasm. The protein resides in the vacuole lumen. It catalyses the reaction Release of an N-terminal aspartate or glutamate from a peptide, with a preference for aspartate.. Its activity is regulated as follows. The metalloproteases inhibitors EDTA and 1.10-phenanthroline both inhibit the activity, whereas bestatin, an inhibitor of most aminopeptidases, does not affect enzyme activity. Aspartyl aminopeptidase that contributes to peptide degradation both in the cytosol and the vacuole. Cells may respond to environmental conditions by changing the distributions of the cytosolic enzyme to the vacuole when cells need more active vacuolar degradation. The chain is Aspartyl aminopeptidase 4 (APE4) from Saccharomyces cerevisiae (strain ATCC 204508 / S288c) (Baker's yeast).